We begin with the raw amino-acid sequence, 229 residues long: 3-dehydroquinate dehydratase (229 aa).

3-dehydroquinate is bound by residues 33 to 35 (EWR) and Arg-65. The active-site Proton donor/acceptor is His-121. Lys-146 functions as the Schiff-base intermediate with substrate in the catalytic mechanism. Arg-188, Ser-207, and Gln-211 together coordinate 3-dehydroquinate.

The protein belongs to the type-I 3-dehydroquinase family. As to quaternary structure, homodimer.

It catalyses the reaction 3-dehydroquinate = 3-dehydroshikimate + H2O. The protein operates within metabolic intermediate biosynthesis; chorismate biosynthesis; chorismate from D-erythrose 4-phosphate and phosphoenolpyruvate: step 3/7. Functionally, involved in the third step of the chorismate pathway, which leads to the biosynthesis of aromatic amino acids. Catalyzes the cis-dehydration of 3-dehydroquinate (DHQ) and introduces the first double bond of the aromatic ring to yield 3-dehydroshikimate. The chain is 3-dehydroquinate dehydratase from Lactococcus lactis subsp. cremoris (strain SK11).